Consider the following 336-residue polypeptide: tRNA N6-adenosine threonylcarbamoyltransferase (336 aa).

Fe cation contacts are provided by His114 and His118. Residues 136–140 (LVSGG), Asp169, Gly182, Asp186, and Asn275 each bind substrate. Residue Asp301 coordinates Fe cation.

This sequence belongs to the KAE1 / TsaD family. Fe(2+) serves as cofactor.

It is found in the cytoplasm. It catalyses the reaction L-threonylcarbamoyladenylate + adenosine(37) in tRNA = N(6)-L-threonylcarbamoyladenosine(37) in tRNA + AMP + H(+). In terms of biological role, required for the formation of a threonylcarbamoyl group on adenosine at position 37 (t(6)A37) in tRNAs that read codons beginning with adenine. Is involved in the transfer of the threonylcarbamoyl moiety of threonylcarbamoyl-AMP (TC-AMP) to the N6 group of A37, together with TsaE and TsaB. TsaD likely plays a direct catalytic role in this reaction. The sequence is that of tRNA N6-adenosine threonylcarbamoyltransferase from Streptococcus gordonii (strain Challis / ATCC 35105 / BCRC 15272 / CH1 / DL1 / V288).